The following is a 132-amino-acid chain: Large ribosomal subunit protein bL17 (132 aa).

This sequence belongs to the bacterial ribosomal protein bL17 family. Part of the 50S ribosomal subunit. Contacts protein L32.

The polypeptide is Large ribosomal subunit protein bL17 (Shewanella sediminis (strain HAW-EB3)).